The following is a 904-amino-acid chain: Translation initiation factor IF-2 (904 aa).

The segment at 239–316 is disordered; that stretch reads QAATQAKTSE…DDGQGSFQAP (78 aa). The span at 248 to 278 shows a compositional bias: basic and acidic residues; it reads EGAEKGTLHKKPETPGKKGDKGGRAADDGKK. The 168-residue stretch at 404 to 571 folds into the tr-type G domain; sequence HRAPVVTVMG…QVLLQAEILE (168 aa). The interval 413-420 is G1; that stretch reads GHVDHGKT. 413 to 420 lines the GTP pocket; the sequence is GHVDHGKT. The tract at residues 438-442 is G2; that stretch reads GITQH. The G3 stretch occupies residues 459–462; it reads DTPG. GTP is bound by residues 459–463 and 513–516; these read DTPGH and NKID. The interval 513–516 is G4; it reads NKID. A G5 region spans residues 549–551; it reads SAK.

It belongs to the TRAFAC class translation factor GTPase superfamily. Classic translation factor GTPase family. IF-2 subfamily.

The protein localises to the cytoplasm. Its function is as follows. One of the essential components for the initiation of protein synthesis. Protects formylmethionyl-tRNA from spontaneous hydrolysis and promotes its binding to the 30S ribosomal subunits. Also involved in the hydrolysis of GTP during the formation of the 70S ribosomal complex. This is Translation initiation factor IF-2 from Dechloromonas aromatica (strain RCB).